We begin with the raw amino-acid sequence, 397 residues long: Tryptophan synthase beta chain (397 aa).

The residue at position 86 (K86) is an N6-(pyridoxal phosphate)lysine.

Belongs to the TrpB family. In terms of assembly, tetramer of two alpha and two beta chains. Pyridoxal 5'-phosphate is required as a cofactor.

The enzyme catalyses (1S,2R)-1-C-(indol-3-yl)glycerol 3-phosphate + L-serine = D-glyceraldehyde 3-phosphate + L-tryptophan + H2O. Its pathway is amino-acid biosynthesis; L-tryptophan biosynthesis; L-tryptophan from chorismate: step 5/5. The beta subunit is responsible for the synthesis of L-tryptophan from indole and L-serine. The chain is Tryptophan synthase beta chain from Tolumonas auensis (strain DSM 9187 / NBRC 110442 / TA 4).